Reading from the N-terminus, the 523-residue chain is Flavin-dependent halogenase armH5 (523 aa).

G17, A20, and E50 together coordinate FAD. Chloride contacts are provided by S328 and G329. V330 contacts FAD.

The protein belongs to the flavin-dependent halogenase family.

It catalyses the reaction melleolide F + FADH2 + chloride + O2 = 6'-chloromelleolide F + FAD + 2 H2O + H(+). Its function is as follows. Flavin-dependent halogenase involved in the biosynthesis of melleolides, a range of antifungal and phytotoxic polyketide derivatives composed of an orsellinic acid (OA) moiety esterified to various sesquiterpene alcohols. The halogenase catalyzes the transfer of a single chlorine atom to the melleolide backbone, resulting in a 6'-chloromelleolide product. The enzyme acts on free substrate and does not depend on carrier-protein-dependent acceptor molecules. The protein is Flavin-dependent halogenase armH5 of Armillaria mellea (Honey mushroom).